Consider the following 306-residue polypeptide: Pantothenate kinase (306 aa).

91–98 provides a ligand contact to ATP; the sequence is GSVAVGKS.

The protein belongs to the prokaryotic pantothenate kinase family.

Its subcellular location is the cytoplasm. The enzyme catalyses (R)-pantothenate + ATP = (R)-4'-phosphopantothenate + ADP + H(+). It functions in the pathway cofactor biosynthesis; coenzyme A biosynthesis; CoA from (R)-pantothenate: step 1/5. The protein is Pantothenate kinase (coaA) of Streptococcus pyogenes serotype M1.